An 84-amino-acid chain; its full sequence is U4-theraphotoxin-Hhn1a (84 aa).

The N-terminal stretch at 1–22 (MKVTLIAIPTCAAVLVLHTTAA) is a signal peptide. The propeptide occupies 23 to 47 (EELEESQLMEVGMPDTELAAVDEER). Disulfide bonds link cysteine 51–cysteine 65, cysteine 55–cysteine 76, and cysteine 70–cysteine 81.

The protein belongs to the neurotoxin 12 (Hwtx-2) family. 02 (Hwtx-2) subfamily. As to expression, expressed by the venom gland.

It localises to the secreted. Its function is as follows. Postsynaptic neurotoxin. This chain is U4-theraphotoxin-Hhn1a, found in Cyriopagopus hainanus (Chinese bird spider).